The primary structure comprises 450 residues: MKITALASAILAVAQGALALPARAPALDITLSQVNNTRIKAVVKNSGTEKITFVHLNFFNDPSPVKKVSLYRNATEVEFTGIKQRLRSDGLSNDALTTLAPGATYEDEFDIASTANLTQGGPVTVRTQGFVPIAMNNKIAGYIPYSSNELELEVDAEKAVAVPASIKPLDRRTKITSSCTGNRATVLNTALRNAASIASKAADAASSGSSALFTEYFKSTSGNIRSAVAARLKAVASEASMNGGGSTTYYCSDPYGYCDSNVLAYTLPSTNEVVNCELFYTLQEVTNDCHGQDQATTIIHEFTHAPGVYPPGTEDLGYGYSAATALSTSNALNNADSYALFANAVYLNCQGQTGGQTTWDGYSQPGQTEPGTQTMWDGYSQPGQTEPGTQTMWDGYSQPGQTEPGTQTTWDGYSQPGQIEPCTQTMWDGGSEPGQTEPDAQTMWDNFYQA.

Residues 1 to 19 (MKITALASAILAVAQGALA) form the signal peptide. Residues 20 to 172 (LPARAPALDI…PASIKPLDRR (153 aa)) constitute a propeptide that is removed on maturation. Cystine bridges form between Cys179–Cys251 and Cys258–Cys276. Position 300 (His300) interacts with Zn(2+). Glu301 is a catalytic residue. 2 residues coordinate Zn(2+): His304 and Asp315. The span at 364–392 (QPGQTEPGTQTMWDGYSQPGQTEPGTQTM) shows a compositional bias: polar residues. Residues 364–416 (QPGQTEPGTQTMWDGYSQPGQTEPGTQTMWDGYSQPGQTEPGTQTTWDGYSQP) are disordered. Low complexity predominate over residues 398 to 409 (QPGQTEPGTQTT).

Belongs to the peptidase M35 family. Zn(2+) serves as cofactor.

It localises to the secreted. It carries out the reaction Preferential cleavage of bonds with hydrophobic residues in P1'. Also 3-Asn-|-Gln-4 and 8-Gly-|-Ser-9 bonds in insulin B chain.. Secreted metalloproteinase that allows assimilation of proteinaceous substrates. Shows high activities on basic nuclear substrates such as histone and protamine. May be involved in virulence. The sequence is that of Neutral protease 2 homolog AFUB_070680 from Aspergillus fumigatus (strain ATCC MYA-4609 / CBS 101355 / FGSC A1100 / Af293) (Neosartorya fumigata).